The sequence spans 1499 residues: Rap guanine nucleotide exchange factor 2 (1499 aa).

Disordered stretches follow at residues 40–59 and 68–101; these read HVSS…SSSL and SEAG…SDPL. A compositionally biased stretch (acidic residues) spans 83 to 94; it reads VDSEDDDDEEDI. 135–254 lines the a nucleoside 3',5'-cyclic phosphate pocket; that stretch reads AFANMTMSVR…VEEEGEIVMV (120 aa). Residues 267–380 form the N-terminal Ras-GEF domain; it reads KGHIVIKGTS…RLLNIACAAK (114 aa). Residues 385–470 enclose the PDZ domain; that stretch reads LMTLTKPSRE…ITVKTNLFVF (86 aa). A Phosphoserine modification is found at S501. One can recognise a Ras-associating domain in the interval 606-692; it reads PDQVLRVFKA…GRYYLKNNME (87 aa). T644 is subject to Phosphothreonine; by PLK2. A Ras-GEF domain is found at 717 to 944; sequence STVEVATQLS…SQGSTNATVL (228 aa). Phosphoserine; by PLK2 is present on S806. S930 bears the Phosphoserine mark. A Phosphoserine; by PLK2 modification is found at S933. Residues 1002-1050 are disordered; the sequence is PATNTLPKNPGDKKPVKSETSPVAPRAGSQQKAQSLPQPQQQPPPAHKI. S1022 carries the phosphoserine modification. The span at 1031 to 1040 shows a compositional bias: low complexity; the sequence is QQKAQSLPQP. Phosphoserine is present on residues S1080, S1089, S1095, S1116, S1120, and S1159. The tract at residues 1095–1160 is disordered; the sequence is SLERHKKQAE…RSSIVSNSSF (66 aa). 2 stretches are compositionally biased toward low complexity: residues 1111 to 1125 and 1141 to 1160; these read SSQL…QSSP and SDSG…NSSF. A Phosphoserine; by PLK2 modification is found at S1176. Disordered regions lie at residues 1224–1256 and 1305–1499; these read PSTE…SSGS and TKYN…VSAV. 2 stretches are compositionally biased toward polar residues: residues 1247 to 1256 and 1307 to 1331; these read GSWTSCSSGS and YNRQ…SSTG. Residues 1355–1366 show a composition bias toward low complexity; the sequence is EAESSSLTSVTT. Residues 1441–1462 show a composition bias toward polar residues; it reads SSDTAGPSSVQQPHGHPTSSRP. Over residues 1488 to 1499 the composition is skewed to acidic residues; that stretch reads TEEDEDEQVSAV.

It belongs to the RAPGEF2 family. As to quaternary structure, interacts with CDH1, CTNNB1 and TJP1. Interacts (via C-terminal domain) with MAGI2 (via PDZ and WW domains); the interaction occurs before or after NGF stimulation. Interacts with KIDINS220 and NTRK1; the interactions occur after NGF stimulation. Found in a complex, at least composed of KIDINS220, MAGI2, NTRK1 and RAPGEF2; the complex is mainly formed at late endosomes in a neuronal growth factor (NGF)-dependent manner. Interacts (via C-terminal domain) with NEDD4 (via WW domains); this interaction leads to ubiquitination and degradation via the proteasome pathway in a cAMP-independent manner. Interacts with MAGI1 isoform 3 (via PDZ domain). Interacts with ADRB1 (via C-terminal PDZ motif); the interaction is direct. Interacts (via Ras-associating domain) with RAP1A (via GTP-bound active form). Interacts weakly with HRAS (via GDP- and GTP-bound forms). Interacts (via C-terminal domain) with MAGI2 (via PDZ and WW domains). Post-translationally, ubiquitinated by NEDD4, leading to proteasomal degradation. In terms of processing, phosphorylation by PLK2 promotes its activity. Expressed in primary neuronal and endocrine cells (at protein level). Highest expression levels in brain. Lower expression levels in heart, kidney, lung, placenta and blood leukocytes.

The protein resides in the cytoplasm. It localises to the perinuclear region. The protein localises to the cell membrane. Its subcellular location is the late endosome. It is found in the cell junction. Functionally, functions as a guanine nucleotide exchange factor (GEF), which activates Rap and Ras family of small GTPases by exchanging bound GDP for free GTP in a cAMP-dependent manner. Serves as a link between cell surface receptors and Rap/Ras GTPases in intracellular signaling cascades. Also acts as an effector for Rap1 by direct association with Rap1-GTP thereby leading to the amplification of Rap1-mediated signaling. Shows weak activity on HRAS. It is controversial whether RAPGEF2 binds cAMP and cGMP or not. Its binding to ligand-activated beta-1 adrenergic receptor ADRB1 leads to the Ras activation through the G(s)-alpha signaling pathway. Involved in the cAMP-induced Ras and Erk1/2 signaling pathway that leads to sustained inhibition of long term melanogenesis by reducing dendrite extension and melanin synthesis. Also provides inhibitory signals for cell proliferation of melanoma cells and promotes their apoptosis in a cAMP-independent nanner. Regulates cAMP-induced neuritogenesis by mediating the Rap1/B-Raf/ERK signaling through a pathway that is independent on both PKA and RAPGEF3/RAPGEF4. Involved in neuron migration and in the formation of the major forebrain fiber connections forming the corpus callosum, the anterior commissure and the hippocampal commissure during brain development. Involved in neuronal growth factor (NGF)-induced sustained activation of Rap1 at late endosomes and in brain-derived neurotrophic factor (BDNF)-induced axon outgrowth of hippocampal neurons. Plays a role in the regulation of embryonic blood vessel formation and in the establishment of basal junction integrity and endothelial barrier function. May be involved in the regulation of the vascular endothelial growth factor receptor KDR and cadherin CDH5 expression at allantois endothelial cell-cell junctions. This chain is Rap guanine nucleotide exchange factor 2 (RAPGEF2), found in Homo sapiens (Human).